Reading from the N-terminus, the 450-residue chain is Tubulin alpha chain (450 aa).

Residue Gln11 participates in GTP binding. Lys40 carries the post-translational modification N6-acetyllysine. Positions 71, 144, 145, 179, 206, and 228 each coordinate GTP. Mg(2+) is bound at residue Glu71. The active site involves Glu254.

Belongs to the tubulin family. In terms of assembly, dimer of alpha and beta chains. A typical microtubule is a hollow water-filled tube with an outer diameter of 25 nm and an inner diameter of 15 nM. Alpha-beta heterodimers associate head-to-tail to form protofilaments running lengthwise along the microtubule wall with the beta-tubulin subunit facing the microtubule plus end conferring a structural polarity. Microtubules usually have 13 protofilaments but different protofilament numbers can be found in some organisms and specialized cells. Mg(2+) is required as a cofactor. Post-translationally, undergoes a tyrosination/detyrosination cycle, the cyclic removal and re-addition of a C-terminal tyrosine residue by the enzymes tubulin tyrosine carboxypeptidase (TTCP) and tubulin tyrosine ligase (TTL), respectively. Acetylation of alpha chains at Lys-40 stabilizes microtubules and affects affinity and processivity of microtubule motors. This modification has a role in multiple cellular functions, ranging from cell motility, cell cycle progression or cell differentiation to intracellular trafficking and signaling.

The protein resides in the cytoplasm. It localises to the cytoskeleton. It carries out the reaction GTP + H2O = GDP + phosphate + H(+). Tubulin is the major constituent of microtubules, a cylinder consisting of laterally associated linear protofilaments composed of alpha- and beta-tubulin heterodimers. Microtubules grow by the addition of GTP-tubulin dimers to the microtubule end, where a stabilizing cap forms. Below the cap, tubulin dimers are in GDP-bound state, owing to GTPase activity of alpha-tubulin. This Prunus dulcis (Almond) protein is Tubulin alpha chain (TUBA).